Consider the following 62-residue polypeptide: Phospholipase A2 superbin a (62 aa).

3 residues coordinate Ca(2+): Tyr-28, Gly-30, and Gly-32. Cys-29 and Cys-45 form a disulfide bridge. His-48 is a catalytic residue. Residue Asp-49 participates in Ca(2+) binding.

It depends on Ca(2+) as a cofactor. Expressed by the venom gland.

The protein localises to the secreted. The enzyme catalyses a 1,2-diacyl-sn-glycero-3-phosphocholine + H2O = a 1-acyl-sn-glycero-3-phosphocholine + a fatty acid + H(+). In terms of biological role, snake venom phospholipase A2 (PLA2) that inhibits collagen-induced platelet aggregation. In terms of inhibition of platelet aggregation, superbin a is more potent as superbin b, c, and d. PLA2 catalyzes the calcium-dependent hydrolysis of the 2-acyl groups in 3-sn-phosphoglycerides. This is Phospholipase A2 superbin a from Austrelaps superbus (Lowland copperhead snake).